We begin with the raw amino-acid sequence, 176 residues long: RNA pyrophosphohydrolase (176 aa).

One can recognise a Nudix hydrolase domain in the interval 8 to 159 (PYRTCVGMML…KRPVYERVVK (152 aa)). Residues 47–68 (GGVDPGEDTWAAAKRELYEETS) carry the Nudix box motif.

The protein belongs to the Nudix hydrolase family. RppH subfamily. A divalent metal cation serves as cofactor.

Functionally, accelerates the degradation of transcripts by removing pyrophosphate from the 5'-end of triphosphorylated RNA, leading to a more labile monophosphorylated state that can stimulate subsequent ribonuclease cleavage. In Rhodopseudomonas palustris (strain BisA53), this protein is RNA pyrophosphohydrolase.